Here is a 314-residue protein sequence, read N- to C-terminus: MAEISAKLVQELRQKTGAGMMDCKKALIETEGNVEEAADWLRKKGISKAGAKSDRVAAEGLVDTYIQPGGQVGVLIEVNCQTDFVARNEAFKALVKNLAKQAAAADSVESLLAQQYADSPGGTVEEFIKQTIATLGENIQVRRFVNFALAEGTQGVVDSYIHTGGRVGVLVELGSQSESVATNQEFQSLARNTAMQVAACPNVEYVSVDQIPAEVAQKEKDIEMGKDDLANKPENIKEKIVQGRIEKRLKELTLIDQPYIRDQSISVEDLFKQAKTKLGEEIQVTRFVRYILGEGIEKQEISFADEVAAQMGGK.

The involved in Mg(2+) ion dislocation from EF-Tu stretch occupies residues 82 to 85; sequence TDFV.

It belongs to the EF-Ts family.

The protein localises to the cytoplasm. Its function is as follows. Associates with the EF-Tu.GDP complex and induces the exchange of GDP to GTP. It remains bound to the aminoacyl-tRNA.EF-Tu.GTP complex up to the GTP hydrolysis stage on the ribosome. The polypeptide is Elongation factor Ts (Nostoc punctiforme (strain ATCC 29133 / PCC 73102)).